Here is a 349-residue protein sequence, read N- to C-terminus: NADH-quinone oxidoreductase subunit H (349 aa).

Transmembrane regions (helical) follow at residues 11–31, 83–103, 116–136, 162–182, 200–220, 252–272, 288–308, and 323–343; these read FPLL…LLLV, GVFL…WAVI, VGLL…IMGG, IGFV…TTIV, FLDW…ISAL, LFFL…TILF, VPGI…FAMV, and LGWK…AAFL.

Belongs to the complex I subunit 1 family. In terms of assembly, NDH-1 is composed of 14 different subunits. Subunits NuoA, H, J, K, L, M, N constitute the membrane sector of the complex.

It localises to the cell inner membrane. It catalyses the reaction a quinone + NADH + 5 H(+)(in) = a quinol + NAD(+) + 4 H(+)(out). NDH-1 shuttles electrons from NADH, via FMN and iron-sulfur (Fe-S) centers, to quinones in the respiratory chain. The immediate electron acceptor for the enzyme in this species is believed to be ubiquinone. Couples the redox reaction to proton translocation (for every two electrons transferred, four hydrogen ions are translocated across the cytoplasmic membrane), and thus conserves the redox energy in a proton gradient. This subunit may bind ubiquinone. This is NADH-quinone oxidoreductase subunit H from Bartonella henselae (strain ATCC 49882 / DSM 28221 / CCUG 30454 / Houston 1) (Rochalimaea henselae).